A 1548-amino-acid chain; its full sequence is Zinc finger MYM-type protein 4 (1548 aa).

At alanine 2 the chain carries N-acetylalanine. The residue at position 107 (threonine 107) is a Phosphothreonine. Phosphoserine occurs at positions 110 and 122. Glycyl lysine isopeptide (Lys-Gly) (interchain with G-Cter in SUMO2) cross-links involve residues lysine 140 and lysine 149. Position 162 is a phosphoserine (serine 162). The interval 162-189 (SKETFSGKEKNRDLTYEREKRLDKPHKD) is disordered. Lysine 195 participates in a covalent cross-link: Glycyl lysine isopeptide (Lys-Gly) (interchain with G-Cter in SUMO2). Serine 197 is subject to Phosphoserine. Residues lysine 201 and lysine 232 each participate in a glycyl lysine isopeptide (Lys-Gly) (interchain with G-Cter in SUMO2) cross-link. The residue at position 242 (serine 242) is a Phosphoserine. Lysine 250 is covalently cross-linked (Glycyl lysine isopeptide (Lys-Gly) (interchain with G-Cter in SUMO1); alternate). A Glycyl lysine isopeptide (Lys-Gly) (interchain with G-Cter in SUMO2); alternate cross-link involves residue lysine 250. Residues lysine 260, lysine 271, lysine 273, lysine 289, lysine 327, lysine 400, lysine 428, and lysine 430 each participate in a glycyl lysine isopeptide (Lys-Gly) (interchain with G-Cter in SUMO2) cross-link. 9 consecutive MYM-type zinc fingers follow at residues 362 to 402 (QLFC…PKDV), 414 to 457 (KDFC…RHEV), 464 to 499 (HKLC…GSGQ), 510 to 544 (KKFC…AEMI), 554 to 592 (ELFC…QYHL), 600 to 631 (RNFC…LSQG), 708 to 742 (FQFC…KETV), 749 to 788 (KSFC…LVQN), and 795 to 829 (EEFC…SESL). The residue at position 1030 (serine 1030) is a Phosphoserine. Glycyl lysine isopeptide (Lys-Gly) (interchain with G-Cter in SUMO2) cross-links involve residues lysine 1035 and lysine 1061. A phosphoserine mark is found at serine 1064 and serine 1071. Glycyl lysine isopeptide (Lys-Gly) (interchain with G-Cter in SUMO2) cross-links involve residues lysine 1080 and lysine 1127. Residues 1124–1134 (SELKQFSKGET) are compositionally biased toward basic and acidic residues. Disordered stretches follow at residues 1124 to 1183 (SELK…KSIV) and 1231 to 1260 (KCGG…QESS). Residues 1160-1181 (SRTRRRHRDGFPQPRRRGRKKS) are compositionally biased toward basic residues. Phosphoserine occurs at positions 1181 and 1256. Positions 1237–1260 (QASSSPRSDPLGSTQDHALSQESS) are enriched in polar residues. Residue lysine 1431 forms a Glycyl lysine isopeptide (Lys-Gly) (interchain with G-Cter in SUMO2) linkage. Phosphoserine is present on residues serine 1539, serine 1542, and serine 1547.

Expressed at higher level in heart, skeletal muscle, kidney and liver.

Functionally, plays a role in the regulation of cell morphology and cytoskeletal organization. The chain is Zinc finger MYM-type protein 4 (ZMYM4) from Homo sapiens (Human).